We begin with the raw amino-acid sequence, 140 residues long: Immunity protein RhsIC (140 aa).

Functionally, putative immunity protein component of a toxin-immunity protein module, which may function as a cellular contact-dependent growth inhibition (CDI) system. Blocks the toxic effects of expression of the C-terminus (residues 1519-1658) of cognate toxin RhsC in E.coli. The polypeptide is Immunity protein RhsIC (rhsIC) (Dickeya dadantii (strain 3937) (Erwinia chrysanthemi (strain 3937))).